A 380-amino-acid polypeptide reads, in one-letter code: Glucose-1-phosphate adenylyltransferase (380 aa).

Alpha-D-glucose 1-phosphate is bound by residues G164, 179–180, and S190; that span reads EK.

Belongs to the bacterial/plant glucose-1-phosphate adenylyltransferase family. As to quaternary structure, homotetramer.

The catalysed reaction is alpha-D-glucose 1-phosphate + ATP + H(+) = ADP-alpha-D-glucose + diphosphate. The protein operates within glycan biosynthesis; glycogen biosynthesis. Involved in the biosynthesis of ADP-glucose, a building block required for the elongation reactions to produce glycogen. Catalyzes the reaction between ATP and alpha-D-glucose 1-phosphate (G1P) to produce pyrophosphate and ADP-Glc. This is Glucose-1-phosphate adenylyltransferase from Lactococcus lactis subsp. cremoris (strain MG1363).